Consider the following 152-residue polypeptide: Large ribosomal subunit protein uL13 (152 aa).

The segment at 130–152 is disordered; it reads HPHEAQSPEVLDLASKNPKNTRS.

Belongs to the universal ribosomal protein uL13 family. Part of the 50S ribosomal subunit.

This protein is one of the early assembly proteins of the 50S ribosomal subunit, although it is not seen to bind rRNA by itself. It is important during the early stages of 50S assembly. This is Large ribosomal subunit protein uL13 from Dinoroseobacter shibae (strain DSM 16493 / NCIMB 14021 / DFL 12).